Consider the following 90-residue polypeptide: Small ribosomal subunit protein uS15c (90 aa).

The protein belongs to the universal ribosomal protein uS15 family. As to quaternary structure, part of the 30S ribosomal subunit.

Its subcellular location is the plastid. The protein resides in the chloroplast. The sequence is that of Small ribosomal subunit protein uS15c (rps15) from Piper cenocladum (Ant piper).